A 519-amino-acid polypeptide reads, in one-letter code: MNINFSDALMLGGISLSFLLASQAIYFYFIYSPRAKKLGCAPPPIFFSFPLGIPDLIRLVNAWFHDDLLEWFTHRFEEFGRRTAFQSVAGQLWIGTIEPENIKTMLATSFKDYSLGFRYNAMYGLLGNGIFTLSGDGWKNSRALLRPQFSREQVSHLESMRTHINMMINNHFKGGQVVDAQVLYHNLTIDTATEFLFGESTNTLDPALAQQGLPGPKGLVTGEQFAEAFTSALELLSVRVMAGAAWFLVWTPKFWRSCKVCHNFIDYFVYKALATPMEKGQDADRYVFIRELTKETSDPRVIRDQALNILLAGRDTTAALLSFTTYYLGAYPEVYDELREAVIADFGSADAEPPTFEQLKQCKVLQNVIREVLRLHPNVPLNFREAIADTTFPTGGGPNGDQPIFVPKGQKVFYATYVMQRNAGIWGPDSTSFRPDRWNEPREALASGWDYIPFNGGPRICLGQQFALTEASYTLVRICQEFSRIEVLHPDVITARNVMKQRMRLPNSSSGGVITRFIR.

2 helical membrane passes run 10 to 30 and 44 to 64; these read MLGG…FYFI and PIFF…NAWF. C461 provides a ligand contact to heme.

This sequence belongs to the cytochrome P450 family. Heme serves as cofactor.

It localises to the membrane. Its function is as follows. Together with an NADPH cytochrome P450 the enzyme system catalyzes the terminal hydroxylation as the first step in the assimilation of alkanes and fatty acids. This Candida apicola (Yeast) protein is Cytochrome P450 52E2 (CYP52E2).